A 157-amino-acid polypeptide reads, in one-letter code: Putative pre-16S rRNA nuclease (157 aa).

This sequence belongs to the YqgF nuclease family.

Its subcellular location is the cytoplasm. Could be a nuclease involved in processing of the 5'-end of pre-16S rRNA. In Orientia tsutsugamushi (strain Ikeda) (Rickettsia tsutsugamushi), this protein is Putative pre-16S rRNA nuclease.